The primary structure comprises 457 residues: Dihydrolipoyl dehydrogenase (457 aa).

FAD is bound by residues 32–40, lysine 49, and alanine 113; that span reads EKEYFGGVC. Cysteine 40 and cysteine 45 are disulfide-bonded. NAD(+)-binding positions include 178–182, valine 235, and 262–265; these read GGGVI and SIGR. The FAD site is built by aspartate 303 and alanine 311. Catalysis depends on histidine 437, which acts as the Proton acceptor.

This sequence belongs to the class-I pyridine nucleotide-disulfide oxidoreductase family. As to quaternary structure, homodimer. FAD is required as a cofactor.

The protein resides in the cytoplasm. It catalyses the reaction N(6)-[(R)-dihydrolipoyl]-L-lysyl-[protein] + NAD(+) = N(6)-[(R)-lipoyl]-L-lysyl-[protein] + NADH + H(+). Lipoamide dehydrogenase is a component of the alpha-ketoacid dehydrogenase complexes. The protein is Dihydrolipoyl dehydrogenase (pdhD) of Mycoplasma pneumoniae (strain ATCC 29342 / M129 / Subtype 1) (Mycoplasmoides pneumoniae).